The following is a 356-amino-acid chain: Arginine kinase Lit v 2 (356 aa).

One can recognise a Phosphagen kinase N-terminal domain in the interval 9-91; it reads KLEAGFKKLE…FDPIIEDYHV (83 aa). 64–68 provides a ligand contact to L-arginine; it reads GVGIY. The 238-residue stretch at 119–356 folds into the Phosphagen kinase C-terminal domain; it reads FVISTRVRCG…LELIKMEKEM (238 aa). ATP contacts are provided by residues 122–126 and His185; that span reads STRVR. Glu225 contacts L-arginine. Residue Arg229 coordinates ATP. Cys271 is an L-arginine binding site. ATP-binding positions include 280 to 284 and 309 to 314; these read RASVH and RGTRGE. L-arginine is bound at residue Glu314.

Belongs to the ATP:guanido phosphotransferase family. As to expression, expressed in muscle (at protein level). Expressed in muscle, heart, nerve, stomach and hemocytes, with the highest expression in muscle. Very low expression in eyestalk and intestine. Not expressed in hepatopancreas, gill and skin.

The enzyme catalyses L-arginine + ATP = N(omega)-phospho-L-arginine + ADP + H(+). Its activity is regulated as follows. No change in activity after supplementation with 10 mM glucose. However, activity decreases significantly when glucose concentration is higher than 50 mM and almost all activity is lost with 200 mM glucose. Activity is significantly increased after treatment with 10 mM and 50 mM ATP. However, activity drops significantly with 200 mM ATP. Inhibited by 10-200 mM alpha-ketoglutarate. No change in activity after incubation with 10-200 mM L-citrulline, L-ornaline or glycerol. Functionally, catalyzes the reversible transfer of high energy ATP gamma-phosphate group to L-arginine. This chain is Arginine kinase Lit v 2, found in Penaeus vannamei (Whiteleg shrimp).